A 132-amino-acid chain; its full sequence is MAEEGISAGGVMDVNTALQEVLKTALIHDGLARGIREAAKALDKRQAHLCVLASNCDEPMYVKLVEALCAEPQINLIKVDDNKKLGEWVGLCKIDREGKPRKVVGCSCVVVKDYGKESQAKDVIEEYFKIKK.

It belongs to the eukaryotic ribosomal protein eS12 family.

It is found in the cytoplasm. This is Small ribosomal subunit protein eS12 (rps12) from Xenopus laevis (African clawed frog).